The chain runs to 175 residues: Large ribosomal subunit protein uL10 (175 aa).

Belongs to the universal ribosomal protein uL10 family. In terms of assembly, part of the ribosomal stalk of the 50S ribosomal subunit. The N-terminus interacts with L11 and the large rRNA to form the base of the stalk. The C-terminus forms an elongated spine to which L12 dimers bind in a sequential fashion forming a multimeric L10(L12)X complex.

Forms part of the ribosomal stalk, playing a central role in the interaction of the ribosome with GTP-bound translation factors. In Xylella fastidiosa (strain 9a5c), this protein is Large ribosomal subunit protein uL10 (rplJ).